The primary structure comprises 428 residues: Probable protein phosphatase 2C 5 (428 aa).

The PPM-type phosphatase domain occupies 25–297 (RSEKVEKPFV…DDTTCVVVDI (273 aa)). Residues Asp73, Gly74, Asp249, and Asp288 each contribute to the Mn(2+) site.

It belongs to the PP2C family. It depends on Mg(2+) as a cofactor. The cofactor is Mn(2+).

It carries out the reaction O-phospho-L-seryl-[protein] + H2O = L-seryl-[protein] + phosphate. The enzyme catalyses O-phospho-L-threonyl-[protein] + H2O = L-threonyl-[protein] + phosphate. The sequence is that of Probable protein phosphatase 2C 5 from Arabidopsis thaliana (Mouse-ear cress).